A 281-amino-acid polypeptide reads, in one-letter code: MVGVLLSERNGSQKRHCSSISSDDGRKRVDKTRSAMLTDLDILDCPICYQALKIPVFQCGNGHLACSSCCPKLRNKCPACALPVGHIRCRAMERVLESVLVPCRYADLGCTKTIYYGRESTHEKICNFSPCSCPVQGCNYTGSYKDLYEHYDLTHSTGSTAYSFNGVSYIAAMMFISDKILIERVYEKKLLFVVQCFEEPCGVYVSVSCIAPSAPEVGEFSYGLLYTTWEGVTMTYQSPKVKKVLKVSSQRPKDSFMLIPHSLLCGPLLGMMLCINELKQM.

The segment at methionine 1–arginine 26 is disordered. Residues cysteine 45–alanine 81 form an RING-type zinc finger. Residues valine 95–glutamine 280 form an SBD region. Residues serine 98–serine 156 form an SIAH-type zinc finger. Residues cysteine 103, cysteine 110, histidine 122, cysteine 126, cysteine 133, cysteine 138, histidine 150, and histidine 155 each contribute to the Zn(2+) site.

This sequence belongs to the SINA (Seven in absentia) family.

It catalyses the reaction S-ubiquitinyl-[E2 ubiquitin-conjugating enzyme]-L-cysteine + [acceptor protein]-L-lysine = [E2 ubiquitin-conjugating enzyme]-L-cysteine + N(6)-ubiquitinyl-[acceptor protein]-L-lysine.. The protein operates within protein modification; protein ubiquitination. In terms of biological role, E3 ubiquitin-protein ligase that mediates ubiquitination and subsequent proteasomal degradation of target proteins. E3 ubiquitin ligases accept ubiquitin from an E2 ubiquitin-conjugating enzyme in the form of a thioester and then directly transfers the ubiquitin to targeted substrates. It probably triggers the ubiquitin-mediated degradation of different substrates. The chain is Putative E3 ubiquitin-protein ligase SINA-like 6 from Arabidopsis thaliana (Mouse-ear cress).